A 307-amino-acid chain; its full sequence is Ribonuclease Z (307 aa).

7 residues coordinate Zn(2+): His-63, His-65, Asp-67, His-68, His-141, Asp-208, and His-266. The Proton acceptor role is filled by Asp-67.

The protein belongs to the RNase Z family. In terms of assembly, homodimer. It depends on Zn(2+) as a cofactor.

The catalysed reaction is Endonucleolytic cleavage of RNA, removing extra 3' nucleotides from tRNA precursor, generating 3' termini of tRNAs. A 3'-hydroxy group is left at the tRNA terminus and a 5'-phosphoryl group is left at the trailer molecule.. In terms of biological role, zinc phosphodiesterase, which displays some tRNA 3'-processing endonuclease activity. Probably involved in tRNA maturation, by removing a 3'-trailer from precursor tRNA. This is Ribonuclease Z from Chlamydia pneumoniae (Chlamydophila pneumoniae).